Here is a 176-residue protein sequence, read N- to C-terminus: Large ribosomal subunit protein uL6 (176 aa).

It belongs to the universal ribosomal protein uL6 family. As to quaternary structure, part of the 50S ribosomal subunit.

In terms of biological role, this protein binds to the 23S rRNA, and is important in its secondary structure. It is located near the subunit interface in the base of the L7/L12 stalk, and near the tRNA binding site of the peptidyltransferase center. This is Large ribosomal subunit protein uL6 from Lactobacillus helveticus (strain DPC 4571).